The primary structure comprises 212 residues: Peptidyl-prolyl cis-trans isomerase-like 3 (212 aa).

Residues 1-198 (MSVTLHTTHG…EGEEGGYEAI (198 aa)) form the PPIase cyclophilin-type domain.

This sequence belongs to the cyclophilin-type PPIase family. PPIL3 subfamily.

The catalysed reaction is [protein]-peptidylproline (omega=180) = [protein]-peptidylproline (omega=0). Its function is as follows. PPIases accelerate the folding of proteins. It catalyzes the cis-trans isomerization of proline imidic peptide bonds in oligopeptides. The protein is Peptidyl-prolyl cis-trans isomerase-like 3 (cyp10) of Aspergillus fumigatus (strain ATCC MYA-4609 / CBS 101355 / FGSC A1100 / Af293) (Neosartorya fumigata).